Consider the following 182-residue polypeptide: MVGQMKSFLFLFVFLVLTKTVISARKPSKSQPKPCKNFVLYYHDIMFGVDDVQNATSAAVTNPPGLGNFKFGKLVIFDDPMTIDKNFQSEPVARAQGFYFYDMKNDYNAWFAYTLVFNSTQHKGTLNIMGADLMMVQSRDLSVVGGTGDFFMSRGIVTFETDTFEGAKYFRVKMDIKLYECY.

The first 23 residues, 1-23, serve as a signal peptide directing secretion; sequence MVGQMKSFLFLFVFLVLTKTVIS. A disulfide bond links Cys35 and Cys181. Asn54 and Asn118 each carry an N-linked (GlcNAc...) asparagine glycan.

The protein belongs to the plant dirigent protein family. As to quaternary structure, homodimer. Confined to shoot meristem, vascular region of cotyledons and siliques abscission zone.

The protein localises to the secreted. It localises to the extracellular space. The protein resides in the apoplast. Its function is as follows. Dirigent proteins impart stereoselectivity on the phenoxy radical-coupling reaction, yielding optically active lignans from two molecules of coniferyl alcohol in the biosynthesis of lignans, flavonolignans, and alkaloids and thus plays a central role in plant secondary metabolism. Enantiocomplementary dirigent protein that mediates the laccase-catalyzed enantioselective oxidative phenol coupling of (E)-coniferyl alcohol to (-)-pinoresinol. The polypeptide is Dirigent protein 5 (DIR5) (Arabidopsis thaliana (Mouse-ear cress)).